Consider the following 130-residue polypeptide: S-protein homolog 30 (130 aa).

N64 and N77 each carry an N-linked (GlcNAc...) asparagine glycan.

This sequence belongs to the plant self-incompatibility (S1) protein family.

It is found in the secreted. This chain is S-protein homolog 30, found in Arabidopsis thaliana (Mouse-ear cress).